A 580-amino-acid chain; its full sequence is NADH-ubiquinone oxidoreductase chain 5 (580 aa).

The next 16 membrane-spanning stretches (helical) occupy residues 12–32, 50–70, 92–112, 113–133, 153–173, 183–203, 215–235, 244–264, 274–293, 298–320, 343–363, 367–387, 427–447, 463–483, 496–516, and 560–580; these read FYFL…FLLM, IVMT…VLLI, ILLV…PNLI, SILL…IYFQ, VALL…YIFY, MMII…QIPF, TPVS…YLLI, WWMA…AGLG, IIAL…LSMG, AFFH…GSII, CSCF…AGFY, LILE…LFFF, ICFL…LMFL, LFVC…KLFF, FVGS…NYPL, and IYLL…VLVN.

The protein belongs to the complex I subunit 5 family.

It localises to the mitochondrion inner membrane. The enzyme catalyses a ubiquinone + NADH + 5 H(+)(in) = a ubiquinol + NAD(+) + 4 H(+)(out). Functionally, core subunit of the mitochondrial membrane respiratory chain NADH dehydrogenase (Complex I) that is believed to belong to the minimal assembly required for catalysis. Complex I functions in the transfer of electrons from NADH to the respiratory chain. The immediate electron acceptor for the enzyme is believed to be ubiquinone. The polypeptide is NADH-ubiquinone oxidoreductase chain 5 (mt:ND5) (Anopheles gambiae (African malaria mosquito)).